The following is a 5571-amino-acid chain: Polyketide synthase GfsB (5571 aa).

The interval 1–27 (MSVPPPGATPSRTSRTKGLKDRPRMEN) is disordered. A compositionally biased stretch (basic and acidic residues) spans 18–27 (GLKDRPRMEN). The Ketosynthase family 3 (KS3) 1 domain maps to 57 to 483 (QEPVAIIGMS…GTNAHVIIEQ (427 aa)). Module regions lie at residues 57-2148 (QEPV…RDTL), 2167-3728 (DEPL…GSQV), and 3746-5485 (DEPV…HTHL). Active-site for beta-ketoacyl synthase 1 activity residues include Cys-230, His-365, and His-405. The tract at residues 485 to 518 (PAIEGTGLGDDAPPTAEHPEERTPADGGPAPQPV) is disordered. A Malonyl-CoA:ACP transacylase (MAT) 1 domain is found at 611-926 (FVFPGQGSQW…LRSLAEAYAH (316 aa)). The tract at residues 976–1109 (HPLLAAATSL…GYLAVGAHEP (134 aa)) is N-terminal hotdog fold 1. A PKS/mFAS DH 1 domain is found at 976–1264 (HPLLAAATSL…LRPLATNQAP (289 aa)). His-1008 functions as the Proton acceptor; for dehydratase activity 1 in the catalytic mechanism. The interval 1122–1264 (ATPLDVTDLY…LRPLATNQAP (143 aa)) is C-terminal hotdog fold 1. The active-site Proton donor; for dehydratase activity 1 is Asp-1183. The 300-residue stretch at 1478–1777 (GTLDHLTLIP…QARHIGKIVL (300 aa)) folds into the Enoyl reductase (ER) domain. In terms of domain architecture, Ketoreductase (KR) 1 spans 1787–1966 (GTVLVTGATG…TSLAWGLWEE (180 aa)). The region spanning 2073–2148 (RIVNDLVRDH…ELAAHLRDTL (76 aa)) is the Carrier 1 domain. Ser-2108 carries the post-translational modification O-(pantetheine 4'-phosphoryl)serine. The region spanning 2167 to 2593 (DEPLAVVAMS…GTNAHVILEQ (427 aa)) is the Ketosynthase family 3 (KS3) 2 domain. Catalysis depends on for beta-ketoacyl synthase 2 activity residues Cys-2340, His-2475, and His-2515. Residues 2710–3016 (VFSGQGSQRP…AAVALQRGNR (307 aa)) enclose the Malonyl-CoA:ACP transacylase (MAT) 2 domain. Residues 3373–3551 (GTVLVTGGTG…VSVAWGPWAE (179 aa)) enclose the Ketoreductase (KR) 2 domain. Positions 3653–3728 (TALLDLVRGQ…ALAEYVGSQV (76 aa)) constitute a Carrier 2 domain. Ser-3688 bears the O-(pantetheine 4'-phosphoryl)serine mark. Positions 3746–4172 (DEPVAIIGMS…GTNAHVILEQ (427 aa)) constitute a Ketosynthase family 3 (KS3) 3 domain. Catalysis depends on for beta-ketoacyl synthase 3 activity residues Cys-3919, His-4054, and His-4094. Positions 4279 to 4601 (FLFSGQGSQR…ATAHVNGVQP (323 aa)) constitute a Malonyl-CoA:ACP transacylase (MAT) 3 domain. Residues 4649–4774 (HPLLAGVVDL…GALTVAEAVD (126 aa)) form an N-terminal hotdog fold 2 region. A PKS/mFAS DH 2 domain is found at 4649 to 4931 (HPLLAGVVDL…TRPIAAGQLA (283 aa)). His-4681 serves as the catalytic Proton acceptor; for dehydratase activity 2. A C-terminal hotdog fold 2 region spans residues 4787–4931 (AIEVELDDPY…TRPIAAGQLA (145 aa)). Asp-4848 functions as the Proton donor; for dehydratase activity 2 in the catalytic mechanism. A Ketoreductase (KR) 3 domain is found at 5134 to 5306 (LLVTGASGVL…TSLSWGLWAE (173 aa)). The region spanning 5410–5485 (RMVLDLVRDR…ALARYLHTHL (76 aa)) is the Carrier 3 domain. Ser-5445 is modified (O-(pantetheine 4'-phosphoryl)serine).

Requires pantetheine 4'-phosphate as cofactor.

The protein operates within antibiotic biosynthesis. In terms of biological role, second protein in the synthesis of the 16-membered macrolide antibiotics FD-891 and FD-892. Composed of 3 modules. Modifies the product of GfsA by multiple rounds of addition of malonyl-CoA or methylmalonyl-CoA and other modifications to help generate the final products. This Streptomyces halstedii protein is Polyketide synthase GfsB.